Reading from the N-terminus, the 158-residue chain is Protein Smg homolog (158 aa).

This sequence belongs to the Smg family.

In Vibrio atlanticus (strain LGP32) (Vibrio splendidus (strain Mel32)), this protein is Protein Smg homolog.